The chain runs to 254 residues: Alcohol dehydrogenase (254 aa).

10-33 contacts NAD(+); the sequence is FVAGLGGIGLDTSRELVKRDLKNL. Substrate is bound at residue serine 138. Residue tyrosine 151 is the Proton acceptor of the active site.

Belongs to the short-chain dehydrogenases/reductases (SDR) family. Homodimer.

It carries out the reaction a primary alcohol + NAD(+) = an aldehyde + NADH + H(+). It catalyses the reaction a secondary alcohol + NAD(+) = a ketone + NADH + H(+). The chain is Alcohol dehydrogenase (Adh) from Drosophila subobscura (Fruit fly).